A 334-amino-acid polypeptide reads, in one-letter code: Heat-inducible transcription repressor HrcA (334 aa).

Belongs to the HrcA family.

In terms of biological role, negative regulator of class I heat shock genes (grpE-dnaK-dnaJ and groELS operons). Prevents heat-shock induction of these operons. This Verminephrobacter eiseniae (strain EF01-2) protein is Heat-inducible transcription repressor HrcA.